A 378-amino-acid chain; its full sequence is Protein RecA (378 aa).

79–86 provides a ligand contact to ATP; sequence GPESSGKT.

This sequence belongs to the RecA family.

Its subcellular location is the cytoplasm. In terms of biological role, can catalyze the hydrolysis of ATP in the presence of single-stranded DNA, the ATP-dependent uptake of single-stranded DNA by duplex DNA, and the ATP-dependent hybridization of homologous single-stranded DNAs. It interacts with LexA causing its activation and leading to its autocatalytic cleavage. The chain is Protein RecA from Streptococcus pyogenes serotype M12 (strain MGAS2096).